The chain runs to 72 residues: Phycobilisome 37.5 kDa linker polypeptide, phycocyanin-associated, rod (72 aa).

Residues 1–72 (MTSSAAAIRL…ASGNISVREF (72 aa)) enclose the PBS-linker domain.

It belongs to the phycobilisome linker protein family.

The protein resides in the cellular thylakoid membrane. In terms of biological role, rod linker protein, associated with phycocyanin. Linker polypeptides determine the state of aggregation and the location of the disk-shaped phycobiliprotein units within the phycobilisome and modulate their spectroscopic properties in order to mediate a directed and optimal energy transfer. The sequence is that of Phycobilisome 37.5 kDa linker polypeptide, phycocyanin-associated, rod (cpcH2) from Pseudanabaena tenuis (strain PCC 7409).